A 276-amino-acid chain; its full sequence is Bis(5'-nucleosyl)-tetraphosphatase, symmetrical (276 aa).

Belongs to the Ap4A hydrolase family.

The enzyme catalyses P(1),P(4)-bis(5'-adenosyl) tetraphosphate + H2O = 2 ADP + 2 H(+). Its function is as follows. Hydrolyzes diadenosine 5',5'''-P1,P4-tetraphosphate to yield ADP. In Tolumonas auensis (strain DSM 9187 / NBRC 110442 / TA 4), this protein is Bis(5'-nucleosyl)-tetraphosphatase, symmetrical.